The sequence spans 130 residues: Large ribosomal subunit protein bL19 (130 aa).

Belongs to the bacterial ribosomal protein bL19 family.

Its function is as follows. This protein is located at the 30S-50S ribosomal subunit interface and may play a role in the structure and function of the aminoacyl-tRNA binding site. The polypeptide is Large ribosomal subunit protein bL19 (Gluconobacter oxydans (strain 621H) (Gluconobacter suboxydans)).